The sequence spans 196 residues: UMP-CMP kinase (196 aa).

ATP is bound at residue 13–18 (GAGKGT). Position 33 is a phosphoserine (S33). The interval 33-63 (SAGELLRDERKNPDSQYGELIEKYIKDGKIV) is NMP. R39 is a binding site for a ribonucleoside 5'-phosphate. N6-acetyllysine occurs at positions 43 and 55. A ribonucleoside 5'-phosphate-binding positions include 61–63 (KIV) and 93–96 (GFPR). N100 lines the CMP pocket. K106 carries the N6-succinyllysine modification. An LID region spans residues 133–143 (ERGKSSGRSDD). ATP is bound at residue R134. A ribonucleoside 5'-phosphate contacts are provided by R140 and R151. Residue K179 coordinates ATP. The residue at position 180 (S180) is a Phosphoserine.

It belongs to the adenylate kinase family. UMP-CMP kinase subfamily. As to quaternary structure, monomer. The cofactor is Mg(2+).

The protein localises to the nucleus. It localises to the cytoplasm. It catalyses the reaction CMP + ATP = CDP + ADP. The catalysed reaction is dCMP + ATP = dCDP + ADP. The enzyme catalyses UMP + ATP = UDP + ADP. It carries out the reaction a 2'-deoxyribonucleoside 5'-diphosphate + ATP = a 2'-deoxyribonucleoside 5'-triphosphate + ADP. It catalyses the reaction a ribonucleoside 5'-diphosphate + ATP = a ribonucleoside 5'-triphosphate + ADP. Its function is as follows. Catalyzes the phosphorylation of pyrimidine nucleoside monophosphates at the expense of ATP. Plays an important role in de novo pyrimidine nucleotide biosynthesis. Has preference for UMP and CMP as phosphate acceptors. Also displays broad nucleoside diphosphate kinase activity. The protein is UMP-CMP kinase of Bos taurus (Bovine).